The following is a 737-amino-acid chain: Catalase-peroxidase (737 aa).

The interval Met-1–Lys-32 is disordered. The span at Gly-20–Lys-32 shows a compositional bias: polar residues. The tryptophyl-tyrosyl-methioninium (Trp-Tyr) (with M-252) cross-link spans Trp-103–Tyr-226. His-104 acts as the Proton acceptor in catalysis. Positions Tyr-226–Met-252 form a cross-link, tryptophyl-tyrosyl-methioninium (Tyr-Met) (with W-103). His-267 contacts heme b.

It belongs to the peroxidase family. Peroxidase/catalase subfamily. In terms of assembly, homodimer or homotetramer. Requires heme b as cofactor. Post-translationally, formation of the three residue Trp-Tyr-Met cross-link is important for the catalase, but not the peroxidase activity of the enzyme.

The catalysed reaction is H2O2 + AH2 = A + 2 H2O. The enzyme catalyses 2 H2O2 = O2 + 2 H2O. Bifunctional enzyme with both catalase and broad-spectrum peroxidase activity. The protein is Catalase-peroxidase of Marinomonas sp. (strain MWYL1).